An 859-amino-acid chain; its full sequence is MTSKQAMSSNEQERLLCYNGEVLVFQLSKGNFADKEPTKTPILHVRRMVFDRGTKVFVQKSTGFFTIKEENSHLKIMCCNCVSDFRTGINLPYIVIEKNKKNNVFEYFLLILHSTNKFEMRLSFKLGYEMKDGLRVLNGPLILWRHVKAFFFISSQTGKVVSVSGNFSSIQWAGEIENLGMVLLGLKECCLSEEECTQEPSKSDYAIWNTKFCVYSLESQEVLSDIYIIPPAYSSVVTYVHICATEIIKNQLRISLIALTRKNQLISFQNGTPKNVCQLPFGDPCAVQLMDSGGGNLFFVVSFISNNACAVWKESFQVAAKWEKLSLVLIDDFIGSGTEQVLLLFKDSLNSDCLTSFKITDLGKINYSSEPSDCNEDDLFEDKQENRYLVVPPLETGLKVCFSSFRELRQHLLLKEKIISKSYKALINLVQGKDDNTSSAEEKECLVPLCGEEENSVHILDEKLSDNFQDSEQLVEKIWYRVIDDSLVVGVKTTSSLKLSLNDVTLSLLMDQAHDSRFRLLKCQNRVIKLSTNPFPAPYLMPCEIGLEAKRVTLTPDSKKEESFVCEHPSKKECVQIITAVTSLSPLLTFSKFCCTVLLQIMERESGNCPKDRYVVCGRVFLSLEDLSTGKYLLTFPKKKPIEHMEDLFALLAAFHKSCFQITSPGYALNSMKVWLLEHMKCEIIKEFPEVYFCERPGSFYGTLFTWKQRTPFEGILIIYSRNQTVMFQCLHNLIRILPINCFLKNLKSGSENFLIDNMAFTLEKELVTLSSLSSAIAKHESNFMQRCEVSKGKSSVVAAALSDRRENIHPYRKELQREKKKMLQTNLKVSGALYREITLKVAEVQLKSDFAAQKLSNL.

N-acetylthreonine is present on threonine 2.

In terms of assembly, belongs to the multisubunit FA complex composed of FANCA, FANCB, FANCC, FANCE, FANCF, FANCG, FANCL/PHF9 and FANCM. The complex is not found in FA patients.

The protein localises to the nucleus. Its function is as follows. DNA repair protein required for FANCD2 ubiquitination. This Homo sapiens (Human) protein is Fanconi anemia group B protein (FANCB).